A 280-amino-acid polypeptide reads, in one-letter code: Acyl-[acyl-carrier-protein]--UDP-N-acetylglucosamine O-acyltransferase (280 aa).

This sequence belongs to the transferase hexapeptide repeat family. LpxA subfamily. In terms of assembly, homotrimer.

It is found in the cytoplasm. It catalyses the reaction a (3R)-hydroxyacyl-[ACP] + UDP-N-acetyl-alpha-D-glucosamine = a UDP-3-O-[(3R)-3-hydroxyacyl]-N-acetyl-alpha-D-glucosamine + holo-[ACP]. Its pathway is glycolipid biosynthesis; lipid IV(A) biosynthesis; lipid IV(A) from (3R)-3-hydroxytetradecanoyl-[acyl-carrier-protein] and UDP-N-acetyl-alpha-D-glucosamine: step 1/6. Involved in the biosynthesis of lipid A, a phosphorylated glycolipid that anchors the lipopolysaccharide to the outer membrane of the cell. In Chlamydia trachomatis serovar A (strain ATCC VR-571B / DSM 19440 / HAR-13), this protein is Acyl-[acyl-carrier-protein]--UDP-N-acetylglucosamine O-acyltransferase.